Reading from the N-terminus, the 196-residue chain is MELIERVNGHFLESMAAKQLAMEVLPGTIAQAAESMVACLMNEGKILACGNGGSAADAQHFAAEMVGRFEKERPGLAALSLATDTSALTAIGNDYDFERVFSKQVRALGQDGDLLLALSTSGNSLNVIEAIHAAHERQMGVIALTGRDGGQIADLMTADDILINVPVERTARIQEVHITIIHALCDAVDYMLLGGD.

An SIS domain is found at 36 to 196 (MVACLMNEGK…AVDYMLLGGD (161 aa)). 51-53 (NGG) is a substrate binding site. Zn(2+) is bound by residues H60 and E64. Substrate-binding positions include E64, 93–94 (ND), 119–121 (STS), S124, and Q174. Zn(2+) contacts are provided by Q174 and H182.

It belongs to the SIS family. GmhA subfamily. In terms of assembly, homotetramer. It depends on Zn(2+) as a cofactor.

The protein localises to the cytoplasm. It carries out the reaction 2 D-sedoheptulose 7-phosphate = D-glycero-alpha-D-manno-heptose 7-phosphate + D-glycero-beta-D-manno-heptose 7-phosphate. It functions in the pathway carbohydrate biosynthesis; D-glycero-D-manno-heptose 7-phosphate biosynthesis; D-glycero-alpha-D-manno-heptose 7-phosphate and D-glycero-beta-D-manno-heptose 7-phosphate from sedoheptulose 7-phosphate: step 1/1. In terms of biological role, catalyzes the isomerization of sedoheptulose 7-phosphate in D-glycero-D-manno-heptose 7-phosphate. This chain is Phosphoheptose isomerase, found in Laribacter hongkongensis (strain HLHK9).